We begin with the raw amino-acid sequence, 867 residues long: GATOR2 complex protein Mio (867 aa).

WD repeat units follow at residues 51–86, 100–144, 149–188, 190–228, and 231–272; these read ANES…GICN, RQQR…PKET, GVGE…ATCQ, IQTK…SPLR, and QSSK…TDNS. The segment covering 350–376 has biased composition (low complexity); it reads PASPTSTAATPTQQQPTSSCSTNSGSS. The segment at 350–378 is disordered; it reads PASPTSTAATPTQQQPTSSCSTNSGSSLD. Residues 739-777 form a C4-type zinc finger; that stretch reads LSCNFCGKSVSNALLDEPRPRSTTTSTNRLSSCPSCRKP. 13 residues coordinate Zn(2+): Cys741, Cys744, Cys771, Cys774, Cys784, Cys821, Cys824, His826, His829, His832, Cys843, Cys848, and Cys852. The RING-type; atypical zinc finger occupies 778–857; sequence LPRCSLCLMH…CNCRCFDMDG (80 aa).

This sequence belongs to the WD repeat mio family. Component of the GATOR complex consisting of mio, Nup44A/Seh1, Im11, Nplr3, Nplr2, Wdr24, Wdr59 and Sec13. Within the GATOR complex, probable component of the GATOR2 subcomplex which is likely composed of mio, Nup44A/Seh1, Wdr24, Wdr59 and Sec13. Interacts with Wdr24. Interacts with nucleoporin Nup44A/Seh1. The GATOR2 complex associates with unmet in the absence of S-adenosyl-L-methionine; the mio-Wdr24-Nup44A subcomplex is essential and sufficient for this interaction while Wdr59 and Sec13 are dispensable. This association acts as a nutrient sensor to inhibit mTORC1 signaling in the absence of methionine. As to expression, present in the oocyte.

It localises to the nucleus. It is found in the lysosome. Functionally, an essential component of the GATOR subcomplex GATOR2 which functions as an activator of the amino acid-sensing branch of the mTORC1 signaling pathway. The two GATOR subcomplexes, GATOR1 and GATOR2, regulate the mTORC1 pathway in order to mediate metabolic homeostasis, female gametogenesis and the response to amino acid limitation and complete starvation. GATOR2 activates the mTORC1 signaling pathway through the inhibition of the GATOR1 subcomplex, controlling the switch to cell proliferation and growth under nutrient replete conditions and during female oocyte development. This component is required for activating mTORC1 specifically in germline cells to promote cell growth and maintain the oocyte fate. GATOR1 and GATOR2 act at different stages of oogenesis to regulate mTORC1 in order to control meiotic entry and promote oocyte growth and development. After exactly four mitotic cyst divisions, the GATOR1 complex members (Iml1, Nprl2 and Nprl3) down-regulate mTORC1 to slow cellular metabolism and promote the mitotic/meiotic transition. At later stages of oogenesis, the mio and Nup44A components of the GATOR2 complex inhibit GATOR1 and thus activate mTORC1 to promote meiotic progression, and drive oocyte growth and development. In addition to its role in the regulation of the mTORC1 complex, functions independently of mTORC1 to prevent the inappropriate accumulation of autolysosomes in germline tissues. This chain is GATOR2 complex protein Mio, found in Drosophila melanogaster (Fruit fly).